Consider the following 356-residue polypeptide: tRNA pseudouridine synthase D (356 aa).

Residue D84 is the Nucleophile of the active site. Residues 159–302 (GVPNYYGPQR…RRGARRPIRV (144 aa)) enclose the TRUD domain.

The protein belongs to the pseudouridine synthase TruD family.

It catalyses the reaction uridine(13) in tRNA = pseudouridine(13) in tRNA. Its function is as follows. Responsible for synthesis of pseudouridine from uracil-13 in transfer RNAs. The protein is tRNA pseudouridine synthase D of Thermus thermophilus (strain ATCC BAA-163 / DSM 7039 / HB27).